The chain runs to 343 residues: Holliday junction branch migration complex subunit RuvB (343 aa).

The tract at residues 4 to 184 (SDRLISAKAG…FGIVQRLEFY (181 aa)) is large ATPase domain (RuvB-L). Residues Ile23, Arg24, Gly65, Lys68, Thr69, Thr70, 131-133 (EDY), Arg174, Tyr184, and Arg221 contribute to the ATP site. Thr69 contacts Mg(2+). Residues 185–255 (NHQDLTHIIT…IADQALNMLK (71 aa)) form a small ATPAse domain (RuvB-S) region. Residues 258–343 (SQGFDHMDRR…RSGREDDLFE (86 aa)) form a head domain (RuvB-H) region. DNA contacts are provided by Arg294, Arg313, and Arg318.

It belongs to the RuvB family. As to quaternary structure, homohexamer. Forms an RuvA(8)-RuvB(12)-Holliday junction (HJ) complex. HJ DNA is sandwiched between 2 RuvA tetramers; dsDNA enters through RuvA and exits via RuvB. An RuvB hexamer assembles on each DNA strand where it exits the tetramer. Each RuvB hexamer is contacted by two RuvA subunits (via domain III) on 2 adjacent RuvB subunits; this complex drives branch migration. In the full resolvosome a probable DNA-RuvA(4)-RuvB(12)-RuvC(2) complex forms which resolves the HJ.

The protein localises to the cytoplasm. It carries out the reaction ATP + H2O = ADP + phosphate + H(+). Its function is as follows. The RuvA-RuvB-RuvC complex processes Holliday junction (HJ) DNA during genetic recombination and DNA repair, while the RuvA-RuvB complex plays an important role in the rescue of blocked DNA replication forks via replication fork reversal (RFR). RuvA specifically binds to HJ cruciform DNA, conferring on it an open structure. The RuvB hexamer acts as an ATP-dependent pump, pulling dsDNA into and through the RuvAB complex. RuvB forms 2 homohexamers on either side of HJ DNA bound by 1 or 2 RuvA tetramers; 4 subunits per hexamer contact DNA at a time. Coordinated motions by a converter formed by DNA-disengaged RuvB subunits stimulates ATP hydrolysis and nucleotide exchange. Immobilization of the converter enables RuvB to convert the ATP-contained energy into a lever motion, pulling 2 nucleotides of DNA out of the RuvA tetramer per ATP hydrolyzed, thus driving DNA branch migration. The RuvB motors rotate together with the DNA substrate, which together with the progressing nucleotide cycle form the mechanistic basis for DNA recombination by continuous HJ branch migration. Branch migration allows RuvC to scan DNA until it finds its consensus sequence, where it cleaves and resolves cruciform DNA. In Marinobacter nauticus (strain ATCC 700491 / DSM 11845 / VT8) (Marinobacter aquaeolei), this protein is Holliday junction branch migration complex subunit RuvB.